Reading from the N-terminus, the 358-residue chain is Alternative oxidase, mitochondrial (358 aa).

A helical transmembrane segment spans residues 152–172 (LIRYVFLESVAGVPGMVAGML). Fe cation-binding residues include glutamate 159, glutamate 198, and histidine 201. Residues 218–238 (MILGAQGVFFNSFFLCYLFSP) traverse the membrane as a helical segment. Positions 249, 306, and 309 each coordinate Fe cation.

Belongs to the alternative oxidase family. Fe cation serves as cofactor.

Its subcellular location is the mitochondrion inner membrane. Functionally, catalyzes cyanide-resistant oxygen consumption. May increase respiration when the cytochrome respiratory pathway is restricted, or in response to low temperatures. This is Alternative oxidase, mitochondrial (AOX1) from Monilinia fructicola (Brown rot fungus).